A 183-amino-acid chain; its full sequence is PLAT domain-containing protein 2 (183 aa).

A signal peptide spans methionine 1 to alanine 25. The region spanning cysteine 31–asparagine 158 is the PLAT domain.

The protein resides in the endoplasmic reticulum. In terms of biological role, involved in response to abiotic stress. The sequence is that of PLAT domain-containing protein 2 from Arabidopsis thaliana (Mouse-ear cress).